A 288-amino-acid chain; its full sequence is HTH-type transcriptional regulator CzcR (288 aa).

The region spanning 1-58 (MELRDLQIFQSVADQGSVSSAAKELNYVQSNVTARIKQLENELKTPLFYRHKRGMTLT) is the HTH lysR-type domain. Residues 18-37 (VSSAAKELNYVQSNVTARIK) constitute a DNA-binding region (H-T-H motif).

The protein belongs to the LysR transcriptional regulatory family.

This is HTH-type transcriptional regulator CzcR (czcR) from Bacillus cereus (strain ATCC 10987 / NRS 248).